A 630-amino-acid polypeptide reads, in one-letter code: MWRGCVSRGLRSLSKGKGSSSSAPVSAAARLFSTASSSYTVVDHSYDAVVVGAGGAGLRAAIGLSEHGFNTACITKLFPTRSHTVAAQGGINAALGNMTEDDWRWHMYDTVKGSDWLGDQDSIQYMCREAPKAVIELENYGLPFSRTEDGKIYQRAFGGQSLDFGKGGQAYRCACAADRTGHAMLHTLYGQAMKHNTQFFVEYFALDLIMDSEGTCQGVIALNMEDGTLHRFRATNTILATGGYGRAYFSATSAHTCTGDGNAMVARAGLPLQDLEFVQFHPTGIYGAGCLITEGSRGEGGILRNSEGERFMERYAPTAKDLASRDVVSRSMTMEIREGRGVGPLKDHIYLHLNHLPPEVLKERLPGISETAAIFAGVDVTKEPIPVLPTVHYNMGGIPTNYHGEVVTMKGDNPDSVVPGLMAAGEAACASVHGANRLGANSLLDIVVFGRACANRVAETAKPGEKQKPLQKSAGEKTIAWLDKLRNANGSLPTSKIRLNMQRVMQNNAAVFRTQETLEEGCKLITKAWESYHDVKISDRSLIWNSDLIETIELENLLINACITMHSAEARKESRGAHAREDFTKRDDEQWMKHSLGYWENEKVRLAYRPVHMNTLDSEVESFPPKARVY.

A mitochondrion-targeting transit peptide spans 1–31; sequence MWRGCVSRGLRSLSKGKGSSSSAPVSAAARL. FAD contacts are provided by residues 52-57, 75-90, and Asp260; these read GAGGAG and TKLF…AQGG. The residue at position 83 (His83) is a Tele-8alpha-FAD histidine. Residues His281 and Thr293 each contribute to the substrate site. Arg325 functions as the Proton acceptor in the catalytic mechanism. Residue His392 coordinates substrate. Glu426 is a binding site for FAD. Arg437 provides a ligand contact to substrate. 442 to 443 is a binding site for FAD; sequence SL.

This sequence belongs to the FAD-dependent oxidoreductase 2 family. FRD/SDH subfamily. As to quaternary structure, component of complex II composed of eight subunits in plants: four classical SDH subunits SDH1, SDH2, SDH3 and SDH4 (a flavoprotein (FP), an iron-sulfur protein (IP), and a cytochrome b composed of a large and a small subunit.), as well as four subunits unknown in mitochondria from bacteria and heterotrophic eukaryotes. The cofactor is FAD.

The protein resides in the mitochondrion inner membrane. It carries out the reaction a quinone + succinate = fumarate + a quinol. It functions in the pathway carbohydrate metabolism; tricarboxylic acid cycle; fumarate from succinate (eukaryal route): step 1/1. In terms of biological role, flavoprotein (FP) subunit of succinate dehydrogenase (SDH) that is involved in complex II of the mitochondrial electron transport chain and is responsible for transferring electrons from succinate to ubiquinone (coenzyme Q). The chain is Succinate dehydrogenase [ubiquinone] flavoprotein subunit, mitochondrial (SDH1) from Oryza sativa subsp. japonica (Rice).